The sequence spans 406 residues: Trk system potassium uptake protein trkA homolog 1 (406 aa).

Positions 1–124 (MKAVIIGAGE…RAQVGVDLMI (124 aa)) constitute an RCK N-terminal 1 domain. NAD(+) is bound by residues 7 to 11 (GAGEV), D29, 70 to 71 (TG), and R101. The 82-residue stretch at 144 to 225 (IDAEMFAEGK…MEDLESVFGS (82 aa)) folds into the RCK C-terminal domain. In terms of domain architecture, RCK N-terminal 2 spans 230 to 348 (RTRILLIGCG…FEMVGIDMAV (119 aa)). Residue 232-262 (RILLIGCGIVGMYLAKLIDKEENADLRIIEH) coordinates NAD(+).

In terms of biological role, part of a potassium transport system. This is Trk system potassium uptake protein trkA homolog 1 (trkA1) from Methanosarcina mazei (Methanosarcina frisia).